A 457-amino-acid chain; its full sequence is tRNA-2-methylthio-N(6)-dimethylallyladenosine synthase (457 aa).

The 118-residue stretch at 3–120 (KKVYIKTFGC…LPQMIDQRRA (118 aa)) folds into the MTTase N-terminal domain. The [4Fe-4S] cluster site is built by cysteine 12, cysteine 49, cysteine 83, cysteine 157, cysteine 161, and cysteine 164. The Radical SAM core domain maps to 143–377 (RVEGPSAFVS…QATIEENVAR (235 aa)). The region spanning 380–447 (RSMVGKVERI…PHSLRGELLL (68 aa)) is the TRAM domain.

This sequence belongs to the methylthiotransferase family. MiaB subfamily. Monomer. [4Fe-4S] cluster serves as cofactor.

Its subcellular location is the cytoplasm. The catalysed reaction is N(6)-dimethylallyladenosine(37) in tRNA + (sulfur carrier)-SH + AH2 + 2 S-adenosyl-L-methionine = 2-methylsulfanyl-N(6)-dimethylallyladenosine(37) in tRNA + (sulfur carrier)-H + 5'-deoxyadenosine + L-methionine + A + S-adenosyl-L-homocysteine + 2 H(+). Catalyzes the methylthiolation of N6-(dimethylallyl)adenosine (i(6)A), leading to the formation of 2-methylthio-N6-(dimethylallyl)adenosine (ms(2)i(6)A) at position 37 in tRNAs that read codons beginning with uridine. The polypeptide is tRNA-2-methylthio-N(6)-dimethylallyladenosine synthase (Burkholderia ambifaria (strain MC40-6)).